The sequence spans 604 residues: Aspartate--tRNA(Asp/Asn) ligase (604 aa).

Glutamate 175 contacts L-aspartate. The segment at 199–202 (QMFK) is aspartate. Positions 221 and 451 each coordinate L-aspartate. 221–223 (RDE) lines the ATP pocket. Position 485 (glutamate 485) interacts with ATP. Residue arginine 492 coordinates L-aspartate. 537-540 (GIDR) lines the ATP pocket.

This sequence belongs to the class-II aminoacyl-tRNA synthetase family. Type 1 subfamily. Homodimer.

The protein localises to the cytoplasm. The enzyme catalyses tRNA(Asx) + L-aspartate + ATP = L-aspartyl-tRNA(Asx) + AMP + diphosphate. Functionally, aspartyl-tRNA synthetase with relaxed tRNA specificity since it is able to aspartylate not only its cognate tRNA(Asp) but also tRNA(Asn). Reaction proceeds in two steps: L-aspartate is first activated by ATP to form Asp-AMP and then transferred to the acceptor end of tRNA(Asp/Asn). This is Aspartate--tRNA(Asp/Asn) ligase from Erythrobacter litoralis (strain HTCC2594).